The chain runs to 366 residues: uncharacterized protein (366 aa).

The interval 1–135 (MNQTGRTIGG…PPKNVDTIDK (135 aa)) is disordered. Residues 26–38 (PSEDRVSSRDETP) show a composition bias toward basic and acidic residues. Phosphoserine is present on S69. T76 is subject to Phosphothreonine. A Glycyl lysine isopeptide (Lys-Gly) (interchain with G-Cter in ubiquitin) cross-link involves residue K78. The segment covering 97-108 (QHNHHHHRRTSH) has biased composition (basic residues). K187 participates in a covalent cross-link: Glycyl lysine isopeptide (Lys-Gly) (interchain with G-Cter in ubiquitin). Position 189 is a phosphothreonine (T189). K242 participates in a covalent cross-link: Glycyl lysine isopeptide (Lys-Gly) (interchain with G-Cter in ubiquitin). S288 and S294 each carry phosphoserine. The tract at residues 313–366 (THSGHLEQKDVDDNRTSVPVTATQGSGHEDVVKKENTGNKLLRRVKSLKTSKKH) is disordered. The span at 316–327 (GHLEQKDVDDNR) shows a compositional bias: basic and acidic residues. The segment covering 328-338 (TSVPVTATQGS) has biased composition (polar residues). Residues 339-349 (GHEDVVKKENT) show a composition bias toward basic and acidic residues. Over residues 353–366 (LLRRVKSLKTSKKH) the composition is skewed to basic residues. A Phosphoserine modification is found at S359.

The protein belongs to the pal1 family.

Its subcellular location is the cytoplasm. It localises to the nucleus. This is an uncharacterized protein from Saccharomyces cerevisiae (strain ATCC 204508 / S288c) (Baker's yeast).